Here is a 320-residue protein sequence, read N- to C-terminus: Ferrochelatase (320 aa).

The Fe cation site is built by His194 and Glu275.

This sequence belongs to the ferrochelatase family. As to quaternary structure, monomer.

The protein resides in the cytoplasm. It catalyses the reaction heme b + 2 H(+) = protoporphyrin IX + Fe(2+). It functions in the pathway porphyrin-containing compound metabolism; protoheme biosynthesis; protoheme from protoporphyrin-IX: step 1/1. Its function is as follows. Catalyzes the ferrous insertion into protoporphyrin IX. The protein is Ferrochelatase of Escherichia coli (strain SMS-3-5 / SECEC).